The primary structure comprises 985 residues: Coiled-coil domain-containing protein 33 (985 aa).

The segment at 228-263 (MSPFSTDSDQEGLSWEAGPWQHPAQVPEEPQGRLDT) is disordered. The C2 domain maps to 263–398 (TSQDPYPAAN…VFLRGVNEPL (136 aa)). Positions 599–745 (VEMNNYRRAM…LEERLCERKE (147 aa)) form a coiled coil. Positions 821–842 (AERLQDTNGPGHPKSTETLPAQ) are disordered. A coiled-coil region spans residues 885-928 (DKFNLLAKLEQAQSRILSLENQLEESARHWAREKQNLAIRLQEQ). Positions 931-985 (GFGQPPNSIIIDQPNAGASKNPQQLSKLEPSLPSSDKKLNRPSDSQIEISNNQKT) are disordered. Polar residues-rich tracts occupy residues 946 to 956 (AGASKNPQQLS) and 972 to 985 (PSDS…NQKT).

The polypeptide is Coiled-coil domain-containing protein 33 (Ccdc33) (Mus musculus (Mouse)).